Consider the following 135-residue polypeptide: MNPLVYFSSQSENTHRFICRVDLPALRIPIATEQPALKVDRPYILVVPSYGGGSTKGAVPRQVIIFLNDPHNRAYLRGVIAAGNTNFGAAYCIAGDIIAQKCQVPYLYRFELLGTAEDVANVRKGVTEFWQQQTT.

Belongs to the NrdI family.

In terms of biological role, probably involved in ribonucleotide reductase function. This chain is Protein NrdI, found in Pectobacterium atrosepticum (strain SCRI 1043 / ATCC BAA-672) (Erwinia carotovora subsp. atroseptica).